The following is a 122-amino-acid chain: Large ribosomal subunit protein bL19 (122 aa).

The protein belongs to the bacterial ribosomal protein bL19 family.

In terms of biological role, this protein is located at the 30S-50S ribosomal subunit interface and may play a role in the structure and function of the aminoacyl-tRNA binding site. The chain is Large ribosomal subunit protein bL19 from Chlamydia felis (strain Fe/C-56) (Chlamydophila felis).